Consider the following 405-residue polypeptide: Accessory Sec system protein translocase subunit SecY2 (405 aa).

10 consecutive transmembrane segments (helical) span residues 14-34 (LFTS…LPFV), 65-85 (IFSV…MFSF), 104-124 (MYLT…RLPV), 131-151 (ILVV…LVWL), 156-176 (ASMG…LNIP), 191-211 (GIIV…ALMY), 247-267 (MYVM…GFIF), 285-305 (PLWV…FAFV), 343-363 (FSVI…LFVL), and 368-388 (LLRL…IFTI).

Belongs to the SecY/SEC61-alpha family. SecY2 subfamily. In terms of assembly, component of the accessory SecA2/SecY2 protein translocase complex required to export cell wall proteins. May form heterotrimers with SecE and SecG subunits.

The protein localises to the cell membrane. Part of the accessory SecA2/SecY2 system specifically required for export of possible cell wall proteins. The central subunit of a protein translocation channel. The sequence is that of Accessory Sec system protein translocase subunit SecY2 from Streptococcus pneumoniae serotype 4 (strain ATCC BAA-334 / TIGR4).